The chain runs to 119 residues: Ribonuclease P protein component (119 aa).

Belongs to the RnpA family. In terms of assembly, consists of a catalytic RNA component (M1 or rnpB) and a protein subunit.

It carries out the reaction Endonucleolytic cleavage of RNA, removing 5'-extranucleotides from tRNA precursor.. Functionally, RNaseP catalyzes the removal of the 5'-leader sequence from pre-tRNA to produce the mature 5'-terminus. It can also cleave other RNA substrates such as 4.5S RNA. The protein component plays an auxiliary but essential role in vivo by binding to the 5'-leader sequence and broadening the substrate specificity of the ribozyme. This chain is Ribonuclease P protein component, found in Corynebacterium diphtheriae (strain ATCC 700971 / NCTC 13129 / Biotype gravis).